Here is a 310-residue protein sequence, read N- to C-terminus: NADH-cytochrome b5 reductase 1 (310 aa).

The chain crosses the membrane as a helical span at residues 32–52 (EWLPYAVALAAILSGGKVFSN). Positions 61–166 (TEFQNFELKE…RGPKGAMVYT (106 aa)) constitute an FAD-binding FR-type domain. Residues 146–161 (AGLR…GPKG) and 172–209 (KIGM…QVDL) contribute to the FAD site.

The protein belongs to the flavoprotein pyridine nucleotide cytochrome reductase family. In terms of assembly, monomer. Component of the 2-(3-amino-3-carboxypropyl)histidine synthase complex composed of DPH1, DPH2, DPH3 and a NADH-dependent reductase, predominantly CBR1. FAD serves as cofactor.

It localises to the mitochondrion outer membrane. The enzyme catalyses 2 Fe(III)-[cytochrome b5] + NADH = 2 Fe(II)-[cytochrome b5] + NAD(+) + H(+). The catalysed reaction is 2 Fe(3+)-[Dph3] + NADH = 2 Fe(2+)-[Dph3] + NAD(+) + H(+). The protein operates within protein modification; peptidyl-diphthamide biosynthesis. NADH-dependent reductase for DPH3 and cytochrome b5. Required for the first step of diphthamide biosynthesis, a post-translational modification of histidine which occurs in elongation factor 2. DPH1 and DPH2 transfer a 3-amino-3-carboxypropyl (ACP) group from S-adenosyl-L-methionine (SAM) to a histidine residue, the reaction is assisted by a reduction system comprising DPH3 and a NADH-dependent reductase, predominantly CBR1. By reducing DPH3, also involved in the formation of the tRNA wobble base modification mcm5s 2U (5-methoxycarbonylmethyl-2-thiouridine), mediated by the elongator complex. The cytochrome b5/NADH cytochrome b5 reductase electron transfer system supports the catalytic activity of several sterol biosynthetic enzymes. The sequence is that of NADH-cytochrome b5 reductase 1 (CBR1) from Ajellomyces capsulatus (strain NAm1 / WU24) (Darling's disease fungus).